The chain runs to 251 residues: NLP effector protein Pc129485 (251 aa).

Positions 1 to 19 (MNFRIVLLVLVASLAGAQA) are cleaved as a signal peptide. The Hepta-peptide GHRHDWE motif signature appears at 127-133 (GHRHNWE). Residues asparagine 146 and asparagine 218 are each glycosylated (N-linked (GlcNAc...) asparagine).

This sequence belongs to the Necrosis inducing protein (NPP1) family.

The protein resides in the secreted. Secreted effector that contributes strongly to virulence during infection by P.capsici. This chain is NLP effector protein Pc129485, found in Phytophthora capsici.